The primary structure comprises 176 residues: NADH-quinone oxidoreductase subunit I 2 (176 aa).

2 consecutive 4Fe-4S ferredoxin-type domains span residues 45 to 77 (IVLTRDPDGGERCVACYLCSAACPVDCISMEAA) and 87 to 116 (RWFRINFSRCIFCGLCAEACPTLAIQMTPD). [4Fe-4S] cluster contacts are provided by C57, C60, C63, C67, C96, C99, C102, and C106.

It belongs to the complex I 23 kDa subunit family. In terms of assembly, NDH-1 is composed of 14 different subunits. Subunits NuoA, H, J, K, L, M, N constitute the membrane sector of the complex. [4Fe-4S] cluster serves as cofactor.

The protein resides in the cell inner membrane. It catalyses the reaction a quinone + NADH + 5 H(+)(in) = a quinol + NAD(+) + 4 H(+)(out). In terms of biological role, NDH-1 shuttles electrons from NADH, via FMN and iron-sulfur (Fe-S) centers, to quinones in the respiratory chain. The immediate electron acceptor for the enzyme in this species is believed to be ubiquinone. Couples the redox reaction to proton translocation (for every two electrons transferred, four hydrogen ions are translocated across the cytoplasmic membrane), and thus conserves the redox energy in a proton gradient. The sequence is that of NADH-quinone oxidoreductase subunit I 2 from Geobacter sulfurreducens (strain ATCC 51573 / DSM 12127 / PCA).